The following is a 494-amino-acid chain: Tripartite motif-containing protein 5 (494 aa).

N-acetylalanine is present on Ala2. The RING-type zinc finger occupies 15 to 59 (CPICLELLTEPLSLDCGHSFCQACITANHKKSMLHQGERSCPLCR). Residue Ser86 is modified to Phosphoserine. The B box-type zinc-finger motif lies at 91–132 (QKVDHCARHGEKLLLFCQQDGNVICWLCERSQEHRGHHTLLV). Cys96, His99, Cys118, and His124 together coordinate Zn(2+). The stretch at 132-222 (VEEVAQTYRE…KRLTQSENDM (91 aa)) forms a coiled coil. The segment at 186-199 (FKQLRDILDCEESN) is required for interaction with GABARAP and for autophagy. Residues 280–494 (PDLKGMLQVF…LPMTLCSPRS (215 aa)) enclose the B30.2/SPRY domain.

The protein belongs to the TRIM/RBCC family. In terms of assembly, can form homodimers and homotrimers. In addition to lower-order dimerization, also exhibits a higher-order multimerization and both low- and high-order multimerizations are essential for its restriction activity. Interacts with BTBD1 and BTBD2. Interacts with PSMC4, PSMC5, PSMD7 and HSPA8/HSC70. Interacts (via B30.2/SPRY domain) with HSPA1A/B. Interacts with PSMC2, MAP3K7/TAK1, TAB2 and TAB3. Interacts with SQSTM1. Interacts with TRIM6 and TRIM34. Interacts with ULK1 (phosphorylated form), GABARAP, GABARAPL1, GABARAPL2, MAP1LC3A, MAP1LC3C and BECN1. Post-translationally, degraded in a proteasome-independent fashion in the absence of viral infection but in a proteasome-dependent fashion following exposure to restriction sensitive virus. Autoubiquitinated in a RING finger- and UBE2D2-dependent manner. Monoubiquitinated by TRIM21. Deubiquitinated by Yersinia YopJ. Ubiquitination may not lead to proteasomal degradation.

It is found in the cytoplasm. Its subcellular location is the nucleus. The catalysed reaction is S-ubiquitinyl-[E2 ubiquitin-conjugating enzyme]-L-cysteine + [acceptor protein]-L-lysine = [E2 ubiquitin-conjugating enzyme]-L-cysteine + N(6)-ubiquitinyl-[acceptor protein]-L-lysine.. The protein operates within protein modification; protein ubiquitination. Functionally, capsid-specific restriction factor that prevents infection from non-host-adapted retroviruses. Blocks viral replication early in the life cycle, after viral entry but before reverse transcription. In addition to acting as a capsid-specific restriction factor, also acts as a pattern recognition receptor that activates innate immune signaling in response to the retroviral capsid lattice. Binding to the viral capsid triggers its E3 ubiquitin ligase activity, and in concert with the heterodimeric ubiquitin conjugating enzyme complex UBE2V1-UBE2N (also known as UBC13-UEV1A complex) generates 'Lys-63'-linked polyubiquitin chains, which in turn are catalysts in the autophosphorylation of the MAP3K7/TAK1 complex (includes TAK1, TAB2, and TAB3). Activation of the MAP3K7/TAK1 complex by autophosphorylation results in the induction and expression of NF-kappa-B and MAPK-responsive inflammatory genes, thereby leading to an innate immune response in the infected cell. Plays a role in regulating autophagy through activation of autophagy regulator BECN1 by causing its dissociation from its inhibitors BCL2 and TAB2. The sequence is that of Tripartite motif-containing protein 5 (TRIM5) from Pithecia pithecia (White-faced saki).